The sequence spans 155 residues: Putative methyl-CpG-binding domain protein 12 (155 aa).

A CW-type zinc finger spans residues 1-53 (MVQCTDCKKWRLIPSMQHYNIIKETQLQTPFVCGTTSGWTPNMSCNVPQDGTT). The short motif at 3–45 (QCTDCKKWRLIPSMQHYNIIKETQLQTPFVCGTTSGWTPNMSC) is the MBD-associated domain (MAD) element. The Zn(2+) site is built by Cys-4, Cys-7, Cys-33, and Cys-45. In terms of domain architecture, MBD spans 53–126 (TCDTWPSIPP…SQFSFQIPKP (74 aa)). The disordered stretch occupies residues 130–155 (NYVKKRTRPVKRRKSSKDNNCEKGKK). A compositionally biased stretch (basic residues) spans 133 to 144 (KKRTRPVKRRKS). The short motif at 140–147 (KRRKSSKD) is the Nuclear localization signal element. The span at 145-155 (SKDNNCEKGKK) shows a compositional bias: basic and acidic residues.

It localises to the nucleus. Its function is as follows. Probable transcriptional regulator. The sequence is that of Putative methyl-CpG-binding domain protein 12 (MBD12) from Arabidopsis thaliana (Mouse-ear cress).